The following is a 369-amino-acid chain: Maltose/maltodextrin import ATP-binding protein MalK (369 aa).

In terms of domain architecture, ABC transporter spans 4 to 234 (VTLRNVCKAY…PQNRFVAGFI (231 aa)). 36 to 43 (GPSGCGKS) is an ATP binding site.

The protein belongs to the ABC transporter superfamily. Maltooligosaccharide importer (TC 3.A.1.1.1) family. As to quaternary structure, the complex is composed of two ATP-binding proteins (MalK), two transmembrane proteins (MalG and MalK) and a solute-binding protein (MalE).

It is found in the cell inner membrane. It catalyses the reaction D-maltose(out) + ATP + H2O = D-maltose(in) + ADP + phosphate + H(+). In terms of biological role, part of the ABC transporter complex MalEFGK involved in maltose/maltodextrin import. Responsible for energy coupling to the transport system. This chain is Maltose/maltodextrin import ATP-binding protein MalK, found in Photobacterium profundum (strain SS9).